We begin with the raw amino-acid sequence, 679 residues long: UvrABC system protein B (679 aa).

A Helicase ATP-binding domain is found at 25 to 412 (EGVNQGQRYQ…DGHLAEQVIR (388 aa)). 38–45 (GATGTGKT) provides a ligand contact to ATP. A Beta-hairpin motif is present at residues 91-114 (YYDYYQPEAYVPVSDTYIAKTSSI). The region spanning 429-591 (QVDDLLAEIR…IVPRPAGKRA (163 aa)) is the Helicase C-terminal domain. Residues 639-674 (PELIDQLETKMKEAAKNLNFEEAASLRDRIKKFRQK) enclose the UVR domain.

It belongs to the UvrB family. Forms a heterotetramer with UvrA during the search for lesions. Interacts with UvrC in an incision complex.

It localises to the cytoplasm. The UvrABC repair system catalyzes the recognition and processing of DNA lesions. A damage recognition complex composed of 2 UvrA and 2 UvrB subunits scans DNA for abnormalities. Upon binding of the UvrA(2)B(2) complex to a putative damaged site, the DNA wraps around one UvrB monomer. DNA wrap is dependent on ATP binding by UvrB and probably causes local melting of the DNA helix, facilitating insertion of UvrB beta-hairpin between the DNA strands. Then UvrB probes one DNA strand for the presence of a lesion. If a lesion is found the UvrA subunits dissociate and the UvrB-DNA preincision complex is formed. This complex is subsequently bound by UvrC and the second UvrB is released. If no lesion is found, the DNA wraps around the other UvrB subunit that will check the other stand for damage. The polypeptide is UvrABC system protein B (Prochlorococcus marinus (strain MIT 9313)).